The chain runs to 272 residues: MVFRAPLDFISASRLLLPHFADAPPVLSRSRSPEHPPAGFLSLALPGLCFSATQIASVCETLEETGDIERLARFLWSLPVNTDGRDSISEHESVQRARAVVAFHTGCYRELYRILETHRFTRASHSKLQAMWLEAHYREAEKLRGRPLGPVDKYRVRKKFPLPRTIWDGEQKTHCFKERTRGLLREWYLQDPYPNPGKKRELAHATGLTPTQVGNWFKNRRQRDRAAAAKNRLQHHRICPDSACTLSGGDSSERADGDTFLSVTDSDSDLDV.

The homeobox DNA-binding region spans G169–A228. A disordered region spans residues C244–V272.

The protein belongs to the SIX/Sine oculis homeobox family. Interacts with GMNN.

It localises to the nucleus. Transcriptional regulator which can act as both a transcriptional repressor and activator by binding a ATTA homeodomain core recognition sequence on these target genes. During forebrain development represses WNT1 expression allowing zona limitans intrathalamica formation and thereby ensuring proper anterio-posterior patterning of the diencephalon and formation of the rostral diencephalon. Acts as a direct upstream activator of SHH expression in the rostral diencephalon ventral midline and that in turn SHH maintains its expression. In addition, Six3 activity is required for the formation of the telencephalon. During postnatal stages of brain development is necessary for ependymal cell maturation by promoting the maturation of radial glia into ependymal cells through regulation of neuroblast proliferation and migration. Acts on the proliferation and differentiation of neural progenitor cells through activating transcription of CCND1 and CCND2. During early lens formation plays a role in lens induction and specification by activating directly PAX6 in the presumptive lens ectoderm. In turn PAX6 activates SIX3 resulting in activation of PDGFRA and CCND1 promoting cell proliferation. Also is required for the neuroretina development by directly suppressing WNT8B expression in the anterior neural plate territory. Its action during retina development and lens morphogenesis is AES and TLE4-dependent manner. Furthermore, during eye development regulates several genes expression. Before and during early lens development represses the CRYGF promoter by binding a SIX repressor element. Directly activates RHO transcription, or cooperates with CRX or NRL. Six3 also functions in the formation of the proximodistal axis of the optic cup, and promotes the formation of optic vesicles-like structures. During pituitary development, acts in parallel or alternatively with HESX1 to control cell proliferation through Wnt/beta-catenin pathway. Plays a role in eye development by suppressing WNT1 expression and in dorsal-ventral patterning by repressing BMP signaling pathway. The protein is Homeobox protein SIX3 (six3) of Oryzias latipes (Japanese rice fish).